The following is a 319-amino-acid chain: Quinolinate synthase (319 aa).

2 residues coordinate iminosuccinate: H34 and S51. C96 lines the [4Fe-4S] cluster pocket. Iminosuccinate-binding positions include 122–124 (YIN) and S139. Residue C182 coordinates [4Fe-4S] cluster. Residues 208-210 (HPE) and T225 contribute to the iminosuccinate site. C276 serves as a coordination point for [4Fe-4S] cluster.

This sequence belongs to the quinolinate synthase family. Type 2 subfamily. [4Fe-4S] cluster is required as a cofactor.

The protein localises to the cytoplasm. The enzyme catalyses iminosuccinate + dihydroxyacetone phosphate = quinolinate + phosphate + 2 H2O + H(+). It participates in cofactor biosynthesis; NAD(+) biosynthesis; quinolinate from iminoaspartate: step 1/1. Functionally, catalyzes the condensation of iminoaspartate with dihydroxyacetone phosphate to form quinolinate. The protein is Quinolinate synthase of Thermosynechococcus vestitus (strain NIES-2133 / IAM M-273 / BP-1).